Here is a 192-residue protein sequence, read N- to C-terminus: Adenylate kinase (192 aa).

10-18 is an ATP binding site; the sequence is GVPGVGGTT.

It belongs to the archaeal adenylate kinase family. Monomer.

It is found in the cytoplasm. It catalyses the reaction AMP + ATP = 2 ADP. The polypeptide is Adenylate kinase (adkA) (Methanotorris igneus (Methanococcus igneus)).